Reading from the N-terminus, the 267-residue chain is Large ribosomal subunit protein uL3 (267 aa).

Residues Asn124 to Leu147 are disordered.

Belongs to the universal ribosomal protein uL3 family. In terms of assembly, part of the 50S ribosomal subunit. Forms a cluster with proteins L14 and L19.

Functionally, one of the primary rRNA binding proteins, it binds directly near the 3'-end of the 23S rRNA, where it nucleates assembly of the 50S subunit. The protein is Large ribosomal subunit protein uL3 of Mycoplasmopsis agalactiae (strain NCTC 10123 / CIP 59.7 / PG2) (Mycoplasma agalactiae).